The primary structure comprises 77 residues: U8-lycotoxin-Ls1h (77 aa).

Positions 1–20 (MKLIIFTGLVLFAIVSLIEV) are cleaved as a signal peptide. Residues 21 to 26 (QADNER) constitute a propeptide that is removed on maturation.

The protein belongs to the neurotoxin 19 (CSTX) family. 08 (U8-Lctx) subfamily. Contains 4 disulfide bonds. As to expression, expressed by the venom gland.

The protein resides in the secreted. In Lycosa singoriensis (Wolf spider), this protein is U8-lycotoxin-Ls1h.